The following is a 94-amino-acid chain: Neurotoxin 213 (94 aa).

The signal sequence occupies residues 1–22 (MLKFILTCTSVILFTAVEDSSC). In terms of domain architecture, LCN-type CS-alpha/beta spans 24 to 88 (KGGNYPISVY…YWDYHRNNCK (65 aa)). Intrachain disulfides connect C39–C62, C48–C67, and C52–C69.

Belongs to the long (3 C-C) scorpion toxin superfamily. In terms of tissue distribution, expressed by the venom gland.

Its subcellular location is the secreted. In Lychas mucronatus (Chinese swimming scorpion), this protein is Neurotoxin 213.